A 378-amino-acid polypeptide reads, in one-letter code: Erythronate-4-phosphate dehydrogenase (378 aa).

The substrate site is built by Ser-45 and Thr-66. 2 residues coordinate NAD(+): Asp-146 and Thr-175. Arg-208 is a catalytic residue. Position 232 (Asp-232) interacts with NAD(+). Residue Glu-237 is part of the active site. His-254 functions as the Proton donor in the catalytic mechanism. An NAD(+)-binding site is contributed by Gly-257. Residue Tyr-258 participates in substrate binding.

The protein belongs to the D-isomer specific 2-hydroxyacid dehydrogenase family. PdxB subfamily. As to quaternary structure, homodimer.

The protein localises to the cytoplasm. The catalysed reaction is 4-phospho-D-erythronate + NAD(+) = (R)-3-hydroxy-2-oxo-4-phosphooxybutanoate + NADH + H(+). It functions in the pathway cofactor biosynthesis; pyridoxine 5'-phosphate biosynthesis; pyridoxine 5'-phosphate from D-erythrose 4-phosphate: step 2/5. Catalyzes the oxidation of erythronate-4-phosphate to 3-hydroxy-2-oxo-4-phosphonooxybutanoate. The polypeptide is Erythronate-4-phosphate dehydrogenase (Escherichia coli (strain ATCC 8739 / DSM 1576 / NBRC 3972 / NCIMB 8545 / WDCM 00012 / Crooks)).